We begin with the raw amino-acid sequence, 936 residues long: Lipoxygenase 2.1, chloroplastic (936 aa).

The disordered stretch occupies residues 1 to 69 (MLTATKPLVG…LSADSNGAAV (69 aa)). Residues 47 to 59 (STSTSTTTTTTTT) are compositionally biased toward low complexity. A PLAT domain is found at 88 to 217 (MKATVTVHMS…CTPDKRVFFP (130 aa)). The region spanning 220–936 (SYLPSQTPKG…EMGIPNSISI (717 aa)) is the Lipoxygenase domain. Positions 264–308 (LGNPDDDNNPTTRPVLGGKEHPYPRRCRTGRPRSKKDPFSEERSH) are disordered. Residues 287 to 297 (PRRCRTGRPRS) are compositionally biased toward basic residues. Basic and acidic residues predominate over residues 298–308 (KKDPFSEERSH). The Fe cation site is built by histidine 587, histidine 592, histidine 777, asparagine 781, and isoleucine 936.

This sequence belongs to the lipoxygenase family. Fe cation is required as a cofactor. The N-terminus is blocked.

The protein resides in the plastid. It localises to the chloroplast. It carries out the reaction (9Z,12Z)-octadecadienoate + O2 = (13S)-hydroperoxy-(9Z,11E)-octadecadienoate. The catalysed reaction is (9Z,12Z,15Z)-octadecatrienoate + O2 = (13S)-hydroperoxy-(9Z,11E,15Z)-octadecatrienoate. It functions in the pathway lipid metabolism; oxylipin biosynthesis. Its function is as follows. Plant lipoxygenase may be involved in a number of diverse aspects of plant physiology including growth and development, pest resistance, and senescence or responses to wounding. This enzyme is possibly involved in jasmonic acid synthesis. It exhibits linoleate 13-lipoxygenase and arachidonate 15-lipoxygenase activity. This is Lipoxygenase 2.1, chloroplastic (LOX2.1) from Hordeum vulgare (Barley).